A 285-amino-acid chain; its full sequence is Integrin alpha-1 (285 aa).

At 1–285 the chain is on the extracellular side; it reads ENMTFGTTLV…HYSQDWVMLG (285 aa). N-linked (GlcNAc...) asparagine glycosylation is found at asparagine 2, asparagine 40, asparagine 208, and asparagine 232. The region spanning 66–279 is the VWFA domain; the sequence is IVLDGSNSIY…QAGFSAHYSQ (214 aa).

The protein belongs to the integrin alpha chain family. In terms of assembly, heterodimer of an alpha and a beta subunit. Alpha-1 associates with beta-1.

The protein localises to the membrane. Its function is as follows. Integrin alpha-1/beta-1 is a receptor for laminin and collagen. It recognizes the proline-hydroxylated sequence G-F-P-G-E-R in collagen. Involved in anchorage-dependent, negative regulation of EGF-stimulated cell growth. This chain is Integrin alpha-1 (ITGA1), found in Gallus gallus (Chicken).